A 179-amino-acid chain; its full sequence is Ribosome maturation factor RimM (179 aa).

Residues 97 to 170 (DGELSWNFFV…LITVELPEGL (74 aa)) form the PRC barrel domain.

This sequence belongs to the RimM family. Binds ribosomal protein uS19.

Its subcellular location is the cytoplasm. In terms of biological role, an accessory protein needed during the final step in the assembly of 30S ribosomal subunit, possibly for assembly of the head region. Essential for efficient processing of 16S rRNA. May be needed both before and after RbfA during the maturation of 16S rRNA. It has affinity for free ribosomal 30S subunits but not for 70S ribosomes. The chain is Ribosome maturation factor RimM from Bacteroides thetaiotaomicron (strain ATCC 29148 / DSM 2079 / JCM 5827 / CCUG 10774 / NCTC 10582 / VPI-5482 / E50).